We begin with the raw amino-acid sequence, 420 residues long: MDVLSVSEINAQIKALLEATFLQVRVQGEVSNLTIHKVSGHAYFSLKDSQSVIKCVLFKGNANRLKFALKEGQEVVVFGGISVYVPRGDYQINCFEIEPKDIGSLTLALEQLKEKLRLKGYFDEENKLPKPHFPKRVAVITSQNSAAWADMKKIASKRWPMCELVCINTLMQGEGCVQSVVESIVYADSFHDTKNAFDAIVVARGGGSMEDLYSFNDEKIADALYLAKTFSMSAIGHESDFLLSDLVADLRASTPSNAMEILLPSSDEWLQRLDGFNVKLHRSFKTLLHQKKAHLEHLVASLKRLSFENKHHLNALKLEKLKIALENKTLEFLRFKKTLLEKISTQTLTSPFLQTKTERLNRLENALKLAHANLKLPQFGALVSKNNQAIELEALKRGDKIELSNEKTRASAEILSVDRV.

This sequence belongs to the XseA family. In terms of assembly, heterooligomer composed of large and small subunits.

The protein resides in the cytoplasm. The enzyme catalyses Exonucleolytic cleavage in either 5'- to 3'- or 3'- to 5'-direction to yield nucleoside 5'-phosphates.. Its function is as follows. Bidirectionally degrades single-stranded DNA into large acid-insoluble oligonucleotides, which are then degraded further into small acid-soluble oligonucleotides. This Helicobacter pylori (strain ATCC 700392 / 26695) (Campylobacter pylori) protein is Exodeoxyribonuclease 7 large subunit.